The following is a 73-amino-acid chain: Large ribosomal subunit protein bL31 (73 aa).

This sequence belongs to the bacterial ribosomal protein bL31 family. Type A subfamily. In terms of assembly, part of the 50S ribosomal subunit.

In terms of biological role, binds the 23S rRNA. This Dinoroseobacter shibae (strain DSM 16493 / NCIMB 14021 / DFL 12) protein is Large ribosomal subunit protein bL31.